The sequence spans 198 residues: Formate-dependent nitrite reductase complex subunit NrfG (198 aa).

TPR repeat units lie at residues 73–106 (SEQWALLGEYYLWQNDYSNSLLAYRQALQLRGEN) and 144–177 (ITALMLLASDAFMQANYAQAIELWQKVMDLNSPR).

Required for formate-dependent nitrite reduction. Not required for the biosynthesis of any of the c-type cytochromes nor for the secretion of the periplasmic cytochromes. This Escherichia coli O157:H7 protein is Formate-dependent nitrite reductase complex subunit NrfG (nrfG).